A 494-amino-acid polypeptide reads, in one-letter code: MKTIAFDSNKYLNLQRDHILERISQFDGKLYMEFGGKMLEDYHAARVLPGYEPDNKIKLLKELKEQVEIVIAINANNIEHSKARGDLGISYDQEVFRLIDKFNTLDIYVGSVVITQYNNQPAADAFRKQLEKNGIASYLHYPIKGYPTDINHIISSEGMGKNDYIKTSRNLIVATAPGPGSGKLATCMSQMYHDQINGVKSGYAKFETFPVWNLPLHHPVNLAYEAATADLDDVNMIDPFHLETYGKTAVNYNRDIEVFPVLNRTFERILSKSPYASPTDMGVNMVGFSIVNEEAAIEASKQEIIRRYYQTLVDFKAERVTESAVKKIELLMNDIGVTPDDRHVTVAAHQKAEQTGQPALALQLPNGQIVTGKTSELFGPTAAVIINAIKTLAKIDKTTHLIEPEYVKPIQGLKVNHLGSHNPRLHSNEILIALAITAMTSEEANLAMKELGNLKGSEAHSTVILTEEDKNVLRKLGVNITFDPVYQHHKLYRK.

This sequence belongs to the UPF0371 family.

In Streptococcus pyogenes serotype M6 (strain ATCC BAA-946 / MGAS10394), this protein is UPF0371 protein M6_Spy1067.